Reading from the N-terminus, the 207-residue chain is N-(5'-phosphoribosyl)anthranilate isomerase (207 aa).

This sequence belongs to the TrpF family.

It carries out the reaction N-(5-phospho-beta-D-ribosyl)anthranilate = 1-(2-carboxyphenylamino)-1-deoxy-D-ribulose 5-phosphate. It functions in the pathway amino-acid biosynthesis; L-tryptophan biosynthesis; L-tryptophan from chorismate: step 3/5. The protein is N-(5'-phosphoribosyl)anthranilate isomerase of Staphylococcus epidermidis (strain ATCC 35984 / DSM 28319 / BCRC 17069 / CCUG 31568 / BM 3577 / RP62A).